The following is a 291-amino-acid chain: Shikimate dehydrogenase (NADP(+)) (291 aa).

Shikimate-binding positions include 26–28 (SLS) and Ser-73. Lys-77 functions as the Proton acceptor in the catalytic mechanism. Shikimate contacts are provided by Asn-98 and Asp-113. Residues 137 to 141 (GAGGA) and Val-238 each bind NADP(+). Shikimate is bound at residue Tyr-240. Residue Gly-261 coordinates NADP(+).

It belongs to the shikimate dehydrogenase family. In terms of assembly, homodimer.

The catalysed reaction is shikimate + NADP(+) = 3-dehydroshikimate + NADPH + H(+). Its pathway is metabolic intermediate biosynthesis; chorismate biosynthesis; chorismate from D-erythrose 4-phosphate and phosphoenolpyruvate: step 4/7. Its function is as follows. Involved in the biosynthesis of the chorismate, which leads to the biosynthesis of aromatic amino acids. Catalyzes the reversible NADPH linked reduction of 3-dehydroshikimate (DHSA) to yield shikimate (SA). The polypeptide is Shikimate dehydrogenase (NADP(+)) (Listeria monocytogenes serotype 4b (strain F2365)).